The following is a 133-amino-acid chain: Profilin-3 (133 aa).

Cysteine 13 and cysteine 117 are joined by a disulfide. The short motif at 83-99 (AVIRGKKGSGGITIKKT) is the Involved in PIP2 interaction element. Threonine 113 carries the post-translational modification Phosphothreonine.

This sequence belongs to the profilin family. In terms of assembly, occurs in many kinds of cells as a complex with monomeric actin in a 1:1 ratio. Phosphorylated by MAP kinases.

The protein localises to the cytoplasm. Its subcellular location is the cytoskeleton. Its function is as follows. Binds to actin and affects the structure of the cytoskeleton. At high concentrations, profilin prevents the polymerization of actin, whereas it enhances it at low concentrations. The chain is Profilin-3 from Corylus avellana (European hazel).